We begin with the raw amino-acid sequence, 259 residues long: Bisphosphoglycerate mutase (259 aa).

Residue S2 is modified to N-acetylserine. Substrate contacts are provided by residues 10–17 (RHGEGAWN), 23–24 (CS), R62, 89–92 (ERHY), R100, and 116–117 (RR). The active-site Tele-phosphohistidine intermediate is H11. The Proton donor/acceptor role is filled by E89. T122 bears the Phosphothreonine mark. Position 189–190 (189–190 (GN)) interacts with substrate.

The protein belongs to the phosphoglycerate mutase family. BPG-dependent PGAM subfamily. In terms of assembly, homodimer.

It carries out the reaction (2R)-3-phospho-glyceroyl phosphate = (2R)-2,3-bisphosphoglycerate + H(+). The catalysed reaction is (2R)-2-phosphoglycerate = (2R)-3-phosphoglycerate. At alkaline pH BPGM favors the synthase reaction; however, at lower pH the phosphatase reaction is dominant. Inhibited by citrate. Plays a major role in regulating hemoglobin oxygen affinity by controlling the levels of its allosteric effector 2,3-bisphosphoglycerate (2,3-BPG). Also exhibits mutase (EC 5.4.2.11) activity. This chain is Bisphosphoglycerate mutase (BPGM), found in Bos taurus (Bovine).